The following is a 37-amino-acid chain: Photosystem I reaction center subunit VIII (37 aa).

A helical membrane pass occupies residues 7 to 27 (LPAIFVPLVGLVFPAIAMVSL).

The protein belongs to the PsaI family.

Its subcellular location is the plastid. It is found in the chloroplast thylakoid membrane. Functionally, may help in the organization of the PsaL subunit. In Morus indica (Mulberry), this protein is Photosystem I reaction center subunit VIII.